The primary structure comprises 77 residues: MKNIVPDYRLDMVGEPCPYPAVATLEAMPQLKKGEILEVVSDCPQSINNIPLDARNHGYTVLDIQQDGPTIRYLIQK.

C17 functions as the Cysteine persulfide intermediate in the catalytic mechanism.

Belongs to the sulfur carrier protein TusA family.

This chain is Putative sulfur carrier protein YedF (yedF), found in Escherichia coli O157:H7.